Reading from the N-terminus, the 310-residue chain is Transcription initiation factor IIA subunit 1 (310 aa).

3 disordered regions span residues 52–78 (AISN…LSTV), 91–197 (IQLN…NNKD), and 218–261 (VIPQ…DDPD). Composition is skewed to low complexity over residues 62–77 (TTAT…TLST) and 122–160 (SNGT…PSSL). 3 stretches are compositionally biased toward acidic residues: residues 173-183 (TLDESDNDDDN), 225-236 (LNDDDDLDDEEI), and 246-261 (DSLG…DDPD).

This sequence belongs to the TFIIA subunit 1 family. In terms of assembly, TFIIA is a heterodimer of the large subunit 1 and a small subunit gamma.

The protein resides in the nucleus. In terms of biological role, TFIIA is a component of the transcription machinery of RNA polymerase II and plays an important role in transcriptional activation. TFIIA in a complex with tbp mediates transcriptional activity. This is Transcription initiation factor IIA subunit 1 (gtf2a1) from Dictyostelium discoideum (Social amoeba).